A 1086-amino-acid polypeptide reads, in one-letter code: Isoleucine--tRNA ligase (1086 aa).

A 'HIGH' region motif is present at residues 53-63 (PFANGLPHYGH). The 'KMSKS' region motif lies at 624–628 (KLSKR). ATP is bound at residue Lys627.

It belongs to the class-I aminoacyl-tRNA synthetase family. IleS type 2 subfamily. As to quaternary structure, monomer. It depends on Zn(2+) as a cofactor.

The protein localises to the cytoplasm. The enzyme catalyses tRNA(Ile) + L-isoleucine + ATP = L-isoleucyl-tRNA(Ile) + AMP + diphosphate. Catalyzes the attachment of isoleucine to tRNA(Ile). As IleRS can inadvertently accommodate and process structurally similar amino acids such as valine, to avoid such errors it has two additional distinct tRNA(Ile)-dependent editing activities. One activity is designated as 'pretransfer' editing and involves the hydrolysis of activated Val-AMP. The other activity is designated 'posttransfer' editing and involves deacylation of mischarged Val-tRNA(Ile). This chain is Isoleucine--tRNA ligase, found in Rickettsia prowazekii (strain Madrid E).